The primary structure comprises 438 residues: GDP-mannose 6-dehydrogenase (438 aa).

NAD(+) is bound by residues Tyr10, Val11, Asp30, Lys35, Thr86, and Thr124. Residues Glu161, Lys210, Asn214, His217, Asn225, Tyr256, Tyr257, Arg259, Phe262, and Gly265 each contribute to the GDP-alpha-D-mannuronate site. The active site involves Cys268. Residue Lys271 participates in NAD(+) binding. Lys324 contacts GDP-alpha-D-mannuronate. Arg331 serves as a coordination point for NAD(+).

The protein belongs to the UDP-glucose/GDP-mannose dehydrogenase family.

It catalyses the reaction GDP-alpha-D-mannose + 2 NAD(+) + H2O = GDP-alpha-D-mannuronate + 2 NADH + 3 H(+). The protein operates within glycan biosynthesis; alginate biosynthesis. Functionally, catalyzes the oxidation of guanosine diphospho-D-mannose (GDP-D-mannose) to GDP-D-mannuronic acid, a precursor for alginate polymerization. The alginate layer causes a mucoid phenotype and provides a protective barrier against host immune defenses and antibiotics. The sequence is that of GDP-mannose 6-dehydrogenase (algD) from Pseudomonas savastanoi pv. phaseolicola (Pseudomonas syringae pv. phaseolicola).